Here is a 1021-residue protein sequence, read N- to C-terminus: DNA-directed RNA polymerase 2B, chloroplastic/mitochondrial (1021 aa).

The disordered stretch occupies residues 315–337 (KKQKAEKDKQKEDGEHVTQEQEK). Catalysis depends on residues Asp722, Lys797, and Asp954.

Belongs to the phage and mitochondrial RNA polymerase family.

The protein localises to the plastid. It localises to the chloroplast. Its subcellular location is the mitochondrion. It carries out the reaction RNA(n) + a ribonucleoside 5'-triphosphate = RNA(n+1) + diphosphate. Functionally, DNA-dependent RNA polymerase catalyzes the transcription of DNA into RNA using the four ribonucleoside triphosphates as substrates. This Nicotiana tabacum (Common tobacco) protein is DNA-directed RNA polymerase 2B, chloroplastic/mitochondrial (RPOT2-TOM).